A 226-amino-acid chain; its full sequence is UPF0758 protein SPJ_1027 (226 aa).

In terms of domain architecture, MPN spans 103–225 (SILSSQKLAK…YFSYREKTDL (123 aa)). 3 residues coordinate Zn(2+): histidine 174, histidine 176, and aspartate 187. The short motif at 174-187 (HNHPSGAVAPSQND) is the JAMM motif element.

Belongs to the UPF0758 family.

The chain is UPF0758 protein SPJ_1027 from Streptococcus pneumoniae (strain JJA).